We begin with the raw amino-acid sequence, 185 residues long: Ribosome-recycling factor (185 aa).

It belongs to the RRF family.

It is found in the cytoplasm. Responsible for the release of ribosomes from messenger RNA at the termination of protein biosynthesis. May increase the efficiency of translation by recycling ribosomes from one round of translation to another. This is Ribosome-recycling factor from Klebsiella pneumoniae (strain 342).